The sequence spans 174 residues: Early nodulin-11 (174 aa).

A signal peptide spans methionine 1–alanine 25. Positions serine 28–phenylalanine 174 are disordered. Residues tyrosine 53 to lysine 65 show a composition bias toward pro residues. Residues lysine 70–leucine 83 show a composition bias toward low complexity. The segment covering proline 122–proline 132 has biased composition (basic residues). 2 stretches are compositionally biased toward pro residues: residues asparagine 134–lysine 150 and lysine 159–phenylalanine 174.

This sequence belongs to the plant proline-rich protein superfamily. In terms of tissue distribution, expressed in cotyledons, leaf vasculature, stomatal guard cells and trichomes. In the embryo, expressed in embryo suspensors, the epidermis and underlying tissues of the cotyledons, hypocotyls, and radicle in maturing embryos, and the outer cell layer of the endosperm.

It is found in the secreted. It localises to the cell wall. Its function is as follows. Involved in the infection process during the plant-rhizobium interaction. Involved in actinorhizal root nodulation. Involved in symbiotic association with the nitrogen-fixing actinomycete Frankia spp. The protein is Early nodulin-11 of Medicago truncatula (Barrel medic).